The sequence spans 165 residues: Phosphopantetheine adenylyltransferase (165 aa).

Ser10 is a binding site for substrate. ATP-binding positions include 10 to 11 and His18; that span reads SF. 3 residues coordinate substrate: Lys42, Leu74, and Arg88. Residues 89 to 91, Glu99, and 124 to 130 contribute to the ATP site; these read GLR and YSFLSSS.

It belongs to the bacterial CoaD family. In terms of assembly, homohexamer. Mg(2+) is required as a cofactor.

The protein resides in the cytoplasm. It carries out the reaction (R)-4'-phosphopantetheine + ATP + H(+) = 3'-dephospho-CoA + diphosphate. The protein operates within cofactor biosynthesis; coenzyme A biosynthesis; CoA from (R)-pantothenate: step 4/5. Reversibly transfers an adenylyl group from ATP to 4'-phosphopantetheine, yielding dephospho-CoA (dPCoA) and pyrophosphate. This is Phosphopantetheine adenylyltransferase from Anoxybacillus flavithermus (strain DSM 21510 / WK1).